We begin with the raw amino-acid sequence, 278 residues long: Hydroxyethylthiazole kinase (278 aa).

M48 serves as a coordination point for substrate. Positions 124 and 175 each coordinate ATP. Residue G202 coordinates substrate.

Belongs to the Thz kinase family. Requires Mg(2+) as cofactor.

It catalyses the reaction 5-(2-hydroxyethyl)-4-methylthiazole + ATP = 4-methyl-5-(2-phosphooxyethyl)-thiazole + ADP + H(+). It participates in cofactor biosynthesis; thiamine diphosphate biosynthesis; 4-methyl-5-(2-phosphoethyl)-thiazole from 5-(2-hydroxyethyl)-4-methylthiazole: step 1/1. Its function is as follows. Catalyzes the phosphorylation of the hydroxyl group of 4-methyl-5-beta-hydroxyethylthiazole (THZ). The protein is Hydroxyethylthiazole kinase of Clostridium botulinum (strain Eklund 17B / Type B).